Consider the following 272-residue polypeptide: L-aspartate dehydrogenase (272 aa).

Residues alanine 125 and asparagine 192 each contribute to the NAD(+) site. The active site involves histidine 222.

This sequence belongs to the L-aspartate dehydrogenase family.

It catalyses the reaction L-aspartate + NADP(+) + H2O = oxaloacetate + NH4(+) + NADPH + H(+). It carries out the reaction L-aspartate + NAD(+) + H2O = oxaloacetate + NH4(+) + NADH + H(+). It functions in the pathway cofactor biosynthesis; NAD(+) biosynthesis; iminoaspartate from L-aspartate (dehydrogenase route): step 1/1. Its function is as follows. Specifically catalyzes the NAD or NADP-dependent dehydrogenation of L-aspartate to iminoaspartate. The polypeptide is L-aspartate dehydrogenase (Nitrosopumilus maritimus (strain SCM1)).